Here is a 209-residue protein sequence, read N- to C-terminus: Transcription antitermination protein NusB (209 aa).

Belongs to the NusB family.

Functionally, involved in transcription antitermination. Required for transcription of ribosomal RNA (rRNA) genes. Binds specifically to the boxA antiterminator sequence of the ribosomal RNA (rrn) operons. The chain is Transcription antitermination protein NusB from Cyanothece sp. (strain PCC 7425 / ATCC 29141).